The primary structure comprises 348 residues: Dihydroorotase (348 aa).

Zn(2+) is bound by residues histidine 17 and histidine 19. Substrate is bound by residues 19-21 (HLR) and asparagine 45. Zn(2+)-binding residues include lysine 103, histidine 140, and histidine 178. Residue lysine 103 is modified to N6-carboxylysine. Histidine 140 contacts substrate. Leucine 223 is a binding site for substrate. Zn(2+) is bound at residue aspartate 251. The active site involves aspartate 251. Residues histidine 255 and alanine 267 each contribute to the substrate site.

Belongs to the metallo-dependent hydrolases superfamily. DHOase family. Class II DHOase subfamily. As to quaternary structure, homodimer. Zn(2+) is required as a cofactor.

The enzyme catalyses (S)-dihydroorotate + H2O = N-carbamoyl-L-aspartate + H(+). Its pathway is pyrimidine metabolism; UMP biosynthesis via de novo pathway; (S)-dihydroorotate from bicarbonate: step 3/3. Catalyzes the reversible cyclization of carbamoyl aspartate to dihydroorotate. The protein is Dihydroorotase of Salmonella paratyphi C (strain RKS4594).